Reading from the N-terminus, the 124-residue chain is Glycine cleavage system H protein (124 aa).

The 83-residue stretch at 22–104 (VATVGITEFA…YGAGWLFRVE (83 aa)) folds into the Lipoyl-binding domain. The residue at position 63 (Lys63) is an N6-lipoyllysine.

It belongs to the GcvH family. In terms of assembly, the glycine cleavage system is composed of four proteins: P, T, L and H. (R)-lipoate serves as cofactor.

Its function is as follows. The glycine cleavage system catalyzes the degradation of glycine. The H protein shuttles the methylamine group of glycine from the P protein to the T protein. The sequence is that of Glycine cleavage system H protein from Beutenbergia cavernae (strain ATCC BAA-8 / DSM 12333 / CCUG 43141 / JCM 11478 / NBRC 16432 / NCIMB 13614 / HKI 0122).